A 953-amino-acid chain; its full sequence is Translation initiation factor IF-2 (953 aa).

Disordered stretches follow at residues 52–241 and 279–363; these read KASK…QQEA and TKLK…TERK. Composition is skewed to basic and acidic residues over residues 80 to 89, 98 to 111, and 140 to 188; these read TGSEHVEKTQ, FKAE…EQAA, and QGDK…ENHK. The segment covering 191-207 has biased composition (polar residues); the sequence is RFTNQKKQGRQEPQSKS. The span at 229-241 shows a compositional bias: basic and acidic residues; the sequence is RQSETRFRAQQEA. Polar residues predominate over residues 282 to 291; that stretch reads KSSNISAKST. Positions 300-317 are enriched in basic and acidic residues; sequence ARPEKNRELTHHSQEGQK. Over residues 322 to 338 the composition is skewed to low complexity; the sequence is SWNSQNQVRNQKNSNWN. A compositionally biased stretch (basic residues) spans 339–348; the sequence is KNKKTKKGKN. The region spanning 454–623 is the tr-type G domain; it reads ERAPVVTIMG…LLVAEVEELK (170 aa). The segment at 463 to 470 is G1; that stretch reads GHVDHGKT. Residue 463–470 coordinates GTP; it reads GHVDHGKT. The interval 488 to 492 is G2; the sequence is GITQH. The G3 stretch occupies residues 509–512; the sequence is DTPG. Residues 509–513 and 563–566 contribute to the GTP site; these read DTPGH and NKID. A G4 region spans residues 563-566; the sequence is NKID. Residues 599–601 form a G5 region; that stretch reads SAK.

Belongs to the TRAFAC class translation factor GTPase superfamily. Classic translation factor GTPase family. IF-2 subfamily.

Its subcellular location is the cytoplasm. In terms of biological role, one of the essential components for the initiation of protein synthesis. Protects formylmethionyl-tRNA from spontaneous hydrolysis and promotes its binding to the 30S ribosomal subunits. Also involved in the hydrolysis of GTP during the formation of the 70S ribosomal complex. This Streptococcus pyogenes serotype M4 (strain MGAS10750) protein is Translation initiation factor IF-2.